Here is a 483-residue protein sequence, read N- to C-terminus: MNYGLTHTPSLTTSECLVLGVFSDLALPDFATAIDNEQQGLIKKLCQRVPEPGNTVWQTDVEGHSLLIIQCGKKEEFSANSLQKRVGEITEALIKQRFSSATVCLPRLNQESAEWQLEQMIVQIDNLRYQLLDFKTKHAKSHKLESVIFHLPGATEKSLEMAKAIVTGVEFCRDLANMPANICTPTYLGEQAISLSKQFDQISCQVIGPEEIKEMGMGALLAVAQGSDQPPRLIDIHYHGNKNSAPVILVGKGITFDSGGLSIKPANAMDEMKYDMSGAASVLGVIKACALLKLPINLIGIIASAENLISGSAVKSGDIVTTMSGQTVEIINTDAEGRLVLADALTYAERYNPDFVIDIATLTGAIIVALGNIATGYMTRDEQLAKSIECAANESQDKVWRMPLDEAYQDALESPLADMINAGFDRSAGSITAACFLSRFTEKYRWAHLDIAGTAWISGKKRNATGRPVPLLIQLLRHVANSR.

Mn(2+) contacts are provided by Lys252 and Asp257. The active site involves Lys264. Asp275, Asp334, and Glu336 together coordinate Mn(2+). The active site involves Arg338.

This sequence belongs to the peptidase M17 family. Mn(2+) is required as a cofactor.

It localises to the cytoplasm. It carries out the reaction Release of an N-terminal amino acid, Xaa-|-Yaa-, in which Xaa is preferably Leu, but may be other amino acids including Pro although not Arg or Lys, and Yaa may be Pro. Amino acid amides and methyl esters are also readily hydrolyzed, but rates on arylamides are exceedingly low.. The enzyme catalyses Release of an N-terminal amino acid, preferentially leucine, but not glutamic or aspartic acids.. Its function is as follows. Presumably involved in the processing and regular turnover of intracellular proteins. Catalyzes the removal of unsubstituted N-terminal amino acids from various peptides. The polypeptide is Probable cytosol aminopeptidase (Legionella pneumophila (strain Paris)).